Consider the following 602-residue polypeptide: Threonine--tRNA ligase (602 aa).

The catalytic stretch occupies residues 208-499 (DHRKLGTELK…LTEHCAGEFP (292 aa)). The Zn(2+) site is built by cysteine 300, histidine 351, and histidine 476.

The protein belongs to the class-II aminoacyl-tRNA synthetase family. In terms of assembly, homodimer. The cofactor is Zn(2+).

Its subcellular location is the cytoplasm. It catalyses the reaction tRNA(Thr) + L-threonine + ATP = L-threonyl-tRNA(Thr) + AMP + diphosphate + H(+). Functionally, catalyzes the attachment of threonine to tRNA(Thr) in a two-step reaction: L-threonine is first activated by ATP to form Thr-AMP and then transferred to the acceptor end of tRNA(Thr). Also edits incorrectly charged L-seryl-tRNA(Thr). The polypeptide is Threonine--tRNA ligase (Campylobacter jejuni subsp. jejuni serotype O:2 (strain ATCC 700819 / NCTC 11168)).